The following is a 428-amino-acid chain: Endoplasmic reticulum junction formation protein lunapark (428 aa).

G2 is lipidated: N-myristoyl glycine. The Cytoplasmic portion of the chain corresponds to 2-45; the sequence is GGLFSRWRTKLSTVEVLESIDKEIQALEEFREKNQRLQKLRVGR. The stretch at 16 to 43 forms a coiled coil; it reads EVLESIDKEIQALEEFREKNQRLQKLRV. The chain crosses the membrane as a helical span at residues 46–66; the sequence is LILYSSVLYLFTCLIVYLWYL. At 67 to 77 the chain is on the lumenal side; sequence PDEFTARLAMT. A helical transmembrane segment spans residues 78–98; the sequence is LPFFAFPLIIWSIRTVIIFFF. The Cytoplasmic portion of the chain corresponds to 99–428; that stretch reads SKRTERNNEA…ELNGESLTAE (330 aa). A coiled-coil region spans residues 102–128; it reads TERNNEALDDLKSQRKKILEEVMEKET. Residues S114, S153, S177, S182, and S194 each carry the phosphoserine modification. Positions 143–248 are disordered; the sequence is SKKAKECEPP…PPGPPLARPI (106 aa). Over residues 185–198 the composition is skewed to pro residues; the sequence is QGPPPQVPVSPGPP. 2 positions are modified to phosphothreonine: T211 and T213. 2 positions are modified to phosphoserine: S217 and S227. A C4-type; plays a role in ER morphology zinc finger spans residues 276–301; that stretch reads CQQCFSHNGMALKEEFEYIAFRCAYC. A phosphoserine mark is found at S321, S353, and S384. The segment at 361-428 is disordered; the sequence is NNTEQTDDKI…ELNGESLTAE (68 aa). Acidic residues predominate over residues 386 to 401; the sequence is SEEPEEKQETENEEAS. S414 is subject to Phosphoserine.

The protein belongs to the lunapark family. Homodimer; homodimerization requires the C4-type zinc finger motif and decreases during mitosis in a phosphorylation-dependent manner. In terms of processing, myristoylated; myristoylation is necessary for the endoplasmic reticulum (ER) three-way ER tubular junction formation, but is not required neither for membrane translocation, membrane topology formation, nor for the specific localization to ER membranes. Phosphorylated. Phosphorylation occurs at Ser-177, Ser-182, Ser-217, Ser-227, Ser-321 and Ser-384 during interphase. Phosphorylation occurs at Ser-114, Ser-153, Ser-194, Thr-211 and Ser-353 during mitosis; these phosphorylations reduce both its homodimerization and the ER three-way tubular junction formation. Post-translationally, subject to proteasomal degradation following phosphorylation during mitosis.

Its subcellular location is the endoplasmic reticulum membrane. Endoplasmic reticulum (ER)-shaping membrane protein that plays a role in determining ER morphology. Involved in the stabilization of nascent three-way ER tubular junctions within the ER network. May also play a role as a curvature-stabilizing protein within three-way ER tubular junction network. May be involved in limb and central nervous system development. In Pongo abelii (Sumatran orangutan), this protein is Endoplasmic reticulum junction formation protein lunapark.